Consider the following 871-residue polypeptide: MKSQDIRKQFLEFFKSKSHTIVPSAPMVLKDDPTLMFTNAGMVQFKEFFLGNSVAKSNRVTDTQKCLRVSGKHNDLEEVGHDTYHHTMFEMLGNWSFGDYFKEEAISWAWELLTEVYKISPENLYVSVFEGSDDRDDLGLDTEALELWKKIVPEERIIYGNKKDNFWEMGDQGPCGPCSEIHIDIRSEEEKAKTPGRDLVNMDHPQVVEIWNLVFMQYNRKANGDLEELPAKHIDTGMGFERLCMVLQNTQSNYDTDVFTPLVGEIEEITGVTYGKSEENNIAMRVIADHVRAVAFSIADGQLPSNTGAGYVIRRILRRAIRYGFTFLNTKEPFIYKLVPVLSGQMGATFQELKSQQNLIENVIREEEASFLRTLDQGLILLENLMKESKDKTISGEKAFELYDTFGFPIDLTALILKENGYDLDEKGFEAELKKQKDRSREATAVSAGDWIELNPVDEESFVGYDKLEADAKIARYRKVESKKKGEMFQVVLNKTPFYPEGGGQVGDKGILMSSDGEVVDVVDTKKENNQIIHFTKNLPKNTEAEFKAIVNKTERYNTASNHTATHLLHQALRSILGTHVEQKGSMVQSGYLRFDFSHFSKVTGEELEKVENFVNARIREQLSLDEQRNISYQEAIDQGAIALFGEKYGDSVRAIRFGDSMELCGGIHVKNTSDIWHFKISGESAVASGIRRIEAITGEAAMKYFEEQTNILEEIKSGLKNSNDPVKAINNLQEENINLKRQIESLLKDKAKNLKSKLKHEVKSINGVNFLSKKVDLDAAGIKDLAFQLGEEIDDLFILFGAEQHGKALLSCYISKELVKGKDLNAGQIVRELGKYIQGGGGGQPFFATAGGKNPDGLNEALQKAESFIK.

Residues His563, His567, Cys665, and His669 each coordinate Zn(2+).

It belongs to the class-II aminoacyl-tRNA synthetase family. Zn(2+) is required as a cofactor.

It is found in the cytoplasm. It catalyses the reaction tRNA(Ala) + L-alanine + ATP = L-alanyl-tRNA(Ala) + AMP + diphosphate. In terms of biological role, catalyzes the attachment of alanine to tRNA(Ala) in a two-step reaction: alanine is first activated by ATP to form Ala-AMP and then transferred to the acceptor end of tRNA(Ala). Also edits incorrectly charged Ser-tRNA(Ala) and Gly-tRNA(Ala) via its editing domain. In Christiangramia forsetii (strain DSM 17595 / CGMCC 1.15422 / KT0803) (Gramella forsetii), this protein is Alanine--tRNA ligase.